The sequence spans 258 residues: Imidazole glycerol phosphate synthase subunit HisF (258 aa).

Catalysis depends on residues D11 and D130.

This sequence belongs to the HisA/HisF family. Heterodimer of HisH and HisF.

Its subcellular location is the cytoplasm. It catalyses the reaction 5-[(5-phospho-1-deoxy-D-ribulos-1-ylimino)methylamino]-1-(5-phospho-beta-D-ribosyl)imidazole-4-carboxamide + L-glutamine = D-erythro-1-(imidazol-4-yl)glycerol 3-phosphate + 5-amino-1-(5-phospho-beta-D-ribosyl)imidazole-4-carboxamide + L-glutamate + H(+). It participates in amino-acid biosynthesis; L-histidine biosynthesis; L-histidine from 5-phospho-alpha-D-ribose 1-diphosphate: step 5/9. In terms of biological role, IGPS catalyzes the conversion of PRFAR and glutamine to IGP, AICAR and glutamate. The HisF subunit catalyzes the cyclization activity that produces IGP and AICAR from PRFAR using the ammonia provided by the HisH subunit. This is Imidazole glycerol phosphate synthase subunit HisF from Citrobacter koseri (strain ATCC BAA-895 / CDC 4225-83 / SGSC4696).